The primary structure comprises 370 residues: Aminomethyltransferase (370 aa).

Belongs to the GcvT family. As to quaternary structure, the glycine cleavage system is composed of four proteins: P, T, L and H.

The enzyme catalyses N(6)-[(R)-S(8)-aminomethyldihydrolipoyl]-L-lysyl-[protein] + (6S)-5,6,7,8-tetrahydrofolate = N(6)-[(R)-dihydrolipoyl]-L-lysyl-[protein] + (6R)-5,10-methylene-5,6,7,8-tetrahydrofolate + NH4(+). In terms of biological role, the glycine cleavage system catalyzes the degradation of glycine. The sequence is that of Aminomethyltransferase from Prochlorococcus marinus (strain AS9601).